Here is a 255-residue protein sequence, read N- to C-terminus: Ribonuclease HII (255 aa).

Positions 70-255 (DLVAGIDEVG…FEPVPEFLIK (186 aa)) constitute an RNase H type-2 domain. Positions 76, 77, and 168 each coordinate a divalent metal cation.

Belongs to the RNase HII family. It depends on Mn(2+) as a cofactor. Mg(2+) serves as cofactor.

It localises to the cytoplasm. It carries out the reaction Endonucleolytic cleavage to 5'-phosphomonoester.. Endonuclease that specifically degrades the RNA of RNA-DNA hybrids. In Pediococcus pentosaceus (strain ATCC 25745 / CCUG 21536 / LMG 10740 / 183-1w), this protein is Ribonuclease HII.